The sequence spans 354 residues: Rhodopsin (354 aa).

Over 1-36 the chain is Extracellular; it reads MNGTEGPYFYVPMVNTTGIVRSPYEYPQYYLVSPAA. Residues Asn-2 and Asn-15 are each glycosylated (N-linked (GlcNAc...) asparagine). Residues 37–61 form a helical membrane-spanning segment; it reads YACLGAYMFFLILVGFPINFLTLYV. Residues 62–73 are Cytoplasmic-facing; the sequence is TIEHKKLRTPLN. A helical membrane pass occupies residues 74-96; the sequence is YILLNLAVADLFMVFGGFTTTIY. Over 97–110 the chain is Extracellular; it reads TSMHGYFVLGRLGC. Cys-110 and Cys-187 are oxidised to a cystine. The chain crosses the membrane as a helical span at residues 111 to 133; sequence NLEGYFATLGGEIGLWSLVVLAV. A 'Ionic lock' involved in activated form stabilization motif is present at residues 134–136; it reads ERW. Residues 134–152 are Cytoplasmic-facing; the sequence is ERWLVVCKPISNFRFSENH. The helical transmembrane segment at 153–173 threads the bilayer; the sequence is AIMGLVFTWIMANSCAAPPLL. Over 174-202 the chain is Extracellular; it reads GWSRYIPEGMQCSCGVDYYTRAEGFNNES. A helical membrane pass occupies residues 203–224; that stretch reads FVIYMFICHFCIPLIVVFFCYG. The Cytoplasmic portion of the chain corresponds to 225–252; sequence RLLCAVKEAAAAQQESETTQRAEREVTR. Residues 253–274 form a helical membrane-spanning segment; sequence MVVIMVIGFLVCWIPYASVAWY. The Extracellular portion of the chain corresponds to 275 to 286; that stretch reads IFTHQGSEFGPL. Residues 287-308 form a helical membrane-spanning segment; sequence FMTVPAFFAKSASIYNPLIYIC. At Lys-296 the chain carries N6-(retinylidene)lysine. At 309–354 the chain is on the cytoplasmic side; it reads MNKQFRHCMITTLCCGKNPFEEEEGASTTASKTEASSVSSSSVSPA. Residues Cys-322 and Cys-323 are each lipidated (S-palmitoyl cysteine). The segment at 333 to 354 is disordered; it reads GASTTASKTEASSVSSSSVSPA. Residues 334 to 354 are compositionally biased toward low complexity; it reads ASTTASKTEASSVSSSSVSPA.

Belongs to the G-protein coupled receptor 1 family. Opsin subfamily. In terms of processing, phosphorylated on some or all of the serine and threonine residues present in the C-terminal region. Post-translationally, contains one covalently linked retinal chromophore.

It localises to the membrane. It is found in the cell projection. Its subcellular location is the cilium. The protein localises to the photoreceptor outer segment. Functionally, photoreceptor required for image-forming vision at low light intensity. While most salt water fish species use retinal as chromophore, most freshwater fish use 3-dehydroretinal, or a mixture of retinal and 3-dehydroretinal. Light-induced isomerization of 11-cis to all-trans retinal triggers a conformational change that activates signaling via G-proteins. Subsequent receptor phosphorylation mediates displacement of the bound G-protein alpha subunit by arrestin and terminates signaling. This chain is Rhodopsin (rho), found in Poecilia reticulata (Guppy).